A 295-amino-acid chain; its full sequence is MADTSLSPVLPLFANTPSSVSFKKLRKRLVRGALEVIDTYGLVDRRAIETGEKPHPKWLVCLSGGKDSYGLLAVLLDLQWQGALPVDLIACNLDQGQPGFPKHILPEWLTQNGVTHKIITEDTYSIVTDKVPEGRTYCSMCSRLRRGILYRVAREEGCEAIVLGHHRDDALATFMMNLIHGGRLAAMPPKLLNDDGDVQVFRPLITAAEDDLAKFAEAMEFPIIPCNLCGSQDGLQRVVMNRMLDEWERKKPGTRQVMAKALTNVRPSHLHDPRVFDFAGLMLGGKGEDDPNVPF.

The PP-loop motif motif lies at 63–68; it reads SGGKDS. [4Fe-4S] cluster is bound by residues C138, C141, and C229.

The protein belongs to the TtcA family. In terms of assembly, homodimer. It depends on Mg(2+) as a cofactor. Requires [4Fe-4S] cluster as cofactor.

It localises to the cytoplasm. It carries out the reaction cytidine(32) in tRNA + S-sulfanyl-L-cysteinyl-[cysteine desulfurase] + AH2 + ATP = 2-thiocytidine(32) in tRNA + L-cysteinyl-[cysteine desulfurase] + A + AMP + diphosphate + H(+). It functions in the pathway tRNA modification. Its function is as follows. Catalyzes the ATP-dependent 2-thiolation of cytidine in position 32 of tRNA, to form 2-thiocytidine (s(2)C32). The sulfur atoms are provided by the cysteine/cysteine desulfurase (IscS) system. This chain is tRNA-cytidine(32) 2-sulfurtransferase, found in Hyphomonas neptunium (strain ATCC 15444).